The sequence spans 1292 residues: HMG domain-containing protein 3 (1292 aa).

A DNA-binding region (HMG box) is located at residues 42 to 110 (TKKPRSAYLL…GLDPNSKLSA (69 aa)). Disordered stretches follow at residues 363 to 391 (SKGS…KLTL), 448 to 505 (VQPE…GRAR), and 562 to 588 (KQLG…NRTS). Polar residues predominate over residues 370–391 (RNQQPVTTEQNSSKENASKLTL). Residues 467 to 478 (PTPSEGTSTSSP) are compositionally biased toward low complexity. Residues 562–572 (KQLGQPIQQPS) show a composition bias toward polar residues.

Its subcellular location is the nucleus. This chain is HMG domain-containing protein 3, found in Homo sapiens (Human).